The sequence spans 1059 residues: Carbamoyl phosphate synthase large chain (1059 aa).

Residues 1–401 (MPKRTDIHKI…ALLKAVASLE (401 aa)) are carboxyphosphate synthetic domain. ATP is bound by residues Arg-129, Arg-169, Gly-175, Gly-176, Lys-208, Ile-210, Glu-215, Gly-241, Ile-242, His-243, Gln-284, and Glu-298. An ATP-grasp 1 domain is found at 133-327 (KELMQELGEP…IAKLAAKIAV (195 aa)). 3 residues coordinate Mg(2+): Gln-284, Glu-298, and Asn-300. Gln-284, Glu-298, and Asn-300 together coordinate Mn(2+). The segment at 402–546 (IDQKDLLSKE…YSTYETENES (145 aa)) is oligomerization domain. Residues 547 to 929 (RRSAKPSVLV…ALYKAFAGAG (383 aa)) form a carbamoyl phosphate synthetic domain region. The ATP-grasp 2 domain maps to 671-861 (DQVIKDLNLR…MAQLATKVIL (191 aa)). The ATP site is built by Arg-707, Ala-746, Leu-748, Glu-752, Gly-777, Val-778, His-779, Ser-780, Gln-820, and Glu-832. 3 residues coordinate Mg(2+): Gln-820, Glu-832, and Asn-834. The Mn(2+) site is built by Gln-820, Glu-832, and Asn-834. The region spanning 930–1059 (MEVPDNGAVL…EMTSFKTTEL (130 aa)) is the MGS-like domain. The segment at 930-1059 (MEVPDNGAVL…EMTSFKTTEL (130 aa)) is allosteric domain.

This sequence belongs to the CarB family. In terms of assembly, composed of two chains; the small (or glutamine) chain promotes the hydrolysis of glutamine to ammonia, which is used by the large (or ammonia) chain to synthesize carbamoyl phosphate. Tetramer of heterodimers (alpha,beta)4. It depends on Mg(2+) as a cofactor. Mn(2+) is required as a cofactor.

It catalyses the reaction hydrogencarbonate + L-glutamine + 2 ATP + H2O = carbamoyl phosphate + L-glutamate + 2 ADP + phosphate + 2 H(+). The catalysed reaction is hydrogencarbonate + NH4(+) + 2 ATP = carbamoyl phosphate + 2 ADP + phosphate + 2 H(+). Its pathway is amino-acid biosynthesis; L-arginine biosynthesis; carbamoyl phosphate from bicarbonate: step 1/1. The protein operates within pyrimidine metabolism; UMP biosynthesis via de novo pathway; (S)-dihydroorotate from bicarbonate: step 1/3. Functionally, large subunit of the glutamine-dependent carbamoyl phosphate synthetase (CPSase). CPSase catalyzes the formation of carbamoyl phosphate from the ammonia moiety of glutamine, carbonate, and phosphate donated by ATP, constituting the first step of 2 biosynthetic pathways, one leading to arginine and/or urea and the other to pyrimidine nucleotides. The large subunit (synthetase) binds the substrates ammonia (free or transferred from glutamine from the small subunit), hydrogencarbonate and ATP and carries out an ATP-coupled ligase reaction, activating hydrogencarbonate by forming carboxy phosphate which reacts with ammonia to form carbamoyl phosphate. The polypeptide is Carbamoyl phosphate synthase large chain (Limosilactobacillus fermentum (strain NBRC 3956 / LMG 18251) (Lactobacillus fermentum)).